Consider the following 38-residue polypeptide: Photosystem II reaction center protein L (38 aa).

Residues 17–37 traverse the membrane as a helical segment; sequence SLYWGLLLIFVLAVLFSSYIF.

The protein belongs to the PsbL family. As to quaternary structure, PSII is composed of 1 copy each of membrane proteins PsbA, PsbB, PsbC, PsbD, PsbE, PsbF, PsbH, PsbI, PsbJ, PsbK, PsbL, PsbM, PsbT, PsbY, PsbZ, Psb30/Ycf12, at least 3 peripheral proteins of the oxygen-evolving complex and a large number of cofactors. It forms dimeric complexes.

The protein localises to the plastid. It is found in the chloroplast thylakoid membrane. Its function is as follows. One of the components of the core complex of photosystem II (PSII). PSII is a light-driven water:plastoquinone oxidoreductase that uses light energy to abstract electrons from H(2)O, generating O(2) and a proton gradient subsequently used for ATP formation. It consists of a core antenna complex that captures photons, and an electron transfer chain that converts photonic excitation into a charge separation. This subunit is found at the monomer-monomer interface and is required for correct PSII assembly and/or dimerization. This is Photosystem II reaction center protein L from Bigelowiella natans (Pedinomonas minutissima).